The primary structure comprises 164 residues: UPF0225 protein Shewana3_2159 (164 aa).

It belongs to the UPF0225 family.

The protein is UPF0225 protein Shewana3_2159 of Shewanella sp. (strain ANA-3).